The following is a 121-amino-acid chain: Large ribosomal subunit protein bL20 (121 aa).

This sequence belongs to the bacterial ribosomal protein bL20 family.

In terms of biological role, binds directly to 23S ribosomal RNA and is necessary for the in vitro assembly process of the 50S ribosomal subunit. It is not involved in the protein synthesizing functions of that subunit. This Methylorubrum populi (strain ATCC BAA-705 / NCIMB 13946 / BJ001) (Methylobacterium populi) protein is Large ribosomal subunit protein bL20.